A 385-amino-acid chain; its full sequence is Lipid-A-disaccharide synthase (385 aa).

This sequence belongs to the LpxB family.

The enzyme catalyses a lipid X + a UDP-2-N,3-O-bis[(3R)-3-hydroxyacyl]-alpha-D-glucosamine = a lipid A disaccharide + UDP + H(+). It functions in the pathway bacterial outer membrane biogenesis; LPS lipid A biosynthesis. Its function is as follows. Condensation of UDP-2,3-diacylglucosamine and 2,3-diacylglucosamine-1-phosphate to form lipid A disaccharide, a precursor of lipid A, a phosphorylated glycolipid that anchors the lipopolysaccharide to the outer membrane of the cell. This chain is Lipid-A-disaccharide synthase, found in Rickettsia canadensis (strain McKiel).